Reading from the N-terminus, the 211-residue chain is Uracil phosphoribosyltransferase (211 aa).

5-phospho-alpha-D-ribose 1-diphosphate is bound by residues Arg-78, Arg-103, and 130-138 (DPMLATGSS). Uracil-binding positions include Ile-193 and 198–200 (GDA). Residue Asp-199 participates in 5-phospho-alpha-D-ribose 1-diphosphate binding.

This sequence belongs to the UPRTase family. Mg(2+) serves as cofactor.

It catalyses the reaction UMP + diphosphate = 5-phospho-alpha-D-ribose 1-diphosphate + uracil. The protein operates within pyrimidine metabolism; UMP biosynthesis via salvage pathway; UMP from uracil: step 1/1. Its activity is regulated as follows. Allosterically activated by GTP. In terms of biological role, catalyzes the conversion of uracil and 5-phospho-alpha-D-ribose 1-diphosphate (PRPP) to UMP and diphosphate. The protein is Uracil phosphoribosyltransferase of Acinetobacter baylyi (strain ATCC 33305 / BD413 / ADP1).